Here is a 185-residue protein sequence, read N- to C-terminus: Lysine-rich arabinogalactan protein 17 (185 aa).

A signal peptide spans 1–21; that stretch reads MTRNILLTVTLICIVFITVGG. Positions 25–160 are disordered; it reads ATAPIHSPST…FSPAADDQSG (136 aa). Over residues 43-68 the composition is skewed to low complexity; it reads SPAISPAAPTPESTEAPAKTPVEAPV. Positions 69 to 88 are enriched in pro residues; the sequence is EAPPSPTPASTPQISPPAPS. Residues 111–122 show a composition bias toward basic residues; that stretch reads TKHKKKTKKHKT. Residues 135–146 show a composition bias toward pro residues; it reads PPAPPGEAPGPG. S159 is lipidated: GPI-anchor amidated serine. A propeptide spans 160 to 185 (removed in mature form); sequence GAQRISVVIQMVGAAAIAWSLLVLAF.

Belongs to the lysine-rich AGP family. In terms of processing, O-glycosylated on the hydroxyproline residues. As to expression, predominantly expressed in open flowers. Also expressed in leaves and stems, and at a lower level in roots.

The protein localises to the cell membrane. In terms of biological role, proteoglycan that seems to be implicated in diverse developmental roles such as differentiation, cell-cell recognition, embryogenesis and programmed cell death. This chain is Lysine-rich arabinogalactan protein 17 (AGP17), found in Arabidopsis thaliana (Mouse-ear cress).